The following is a 503-amino-acid chain: Aspartyl/glutamyl-tRNA(Asn/Gln) amidotransferase subunit B (503 aa).

Belongs to the GatB/GatE family. GatB subfamily. Heterotrimer of A, B and C subunits.

The catalysed reaction is L-glutamyl-tRNA(Gln) + L-glutamine + ATP + H2O = L-glutaminyl-tRNA(Gln) + L-glutamate + ADP + phosphate + H(+). It carries out the reaction L-aspartyl-tRNA(Asn) + L-glutamine + ATP + H2O = L-asparaginyl-tRNA(Asn) + L-glutamate + ADP + phosphate + 2 H(+). Functionally, allows the formation of correctly charged Asn-tRNA(Asn) or Gln-tRNA(Gln) through the transamidation of misacylated Asp-tRNA(Asn) or Glu-tRNA(Gln) in organisms which lack either or both of asparaginyl-tRNA or glutaminyl-tRNA synthetases. The reaction takes place in the presence of glutamine and ATP through an activated phospho-Asp-tRNA(Asn) or phospho-Glu-tRNA(Gln). The protein is Aspartyl/glutamyl-tRNA(Asn/Gln) amidotransferase subunit B of Cereibacter sphaeroides (strain ATCC 17029 / ATH 2.4.9) (Rhodobacter sphaeroides).